Consider the following 276-residue polypeptide: MISRTLLKRTVPASRLLRSFTTSNVRLSAHEEDLVNVNNLPRPKPTENYVPLINPTEKYKVQIEELHKFGTYIMSCLPKYIQQFSVWKDELTIYVAPSAIRPVMSYLKNHTSCQFKAVMDITAADYPSRTNRFDVVYNLLSDRHNSRIRVKTYANETSPVPSVTPLFNGANWYERETYDLFGVFFVGHPDLRRIMTDYGFEGHPLRKDFPTTGYTEVRYDEEKKRVIYEPLELTQAWRNFTVGSSVWEPVGEGKDFTPESFKLPTPQPEPEQEEKK.

The segment at 248-276 (EPVGEGKDFTPESFKLPTPQPEPEQEEKK) is disordered.

This sequence belongs to the complex I 30 kDa subunit family. As to quaternary structure, complex I is composed of about 30 different subunits. This is a component of the iron-sulfur protein fraction.

Its subcellular location is the mitochondrion inner membrane. It carries out the reaction a ubiquinone + NADH + 5 H(+)(in) = a ubiquinol + NAD(+) + 4 H(+)(out). Core subunit of the mitochondrial membrane respiratory chain NADH dehydrogenase (Complex I) that is believed to belong to the minimal assembly required for catalysis. Complex I functions in the transfer of electrons from NADH to the respiratory chain. The immediate electron acceptor for the enzyme is believed to be ubiquinone. Essential for N-alkane assimilation. The sequence is that of Probable NADH-ubiquinone oxidoreductase 30.4 kDa subunit, mitochondrial (ALI1) from Candida maltosa (Yeast).